A 572-amino-acid chain; its full sequence is Sulfite reductase [NADPH] hemoprotein beta-component (572 aa).

Positions 437, 443, 482, and 486 each coordinate [4Fe-4S] cluster. Cysteine 486 serves as a coordination point for siroheme.

The protein belongs to the nitrite and sulfite reductase 4Fe-4S domain family. As to quaternary structure, alpha(8)-beta(8). The alpha component is a flavoprotein, the beta component is a hemoprotein. The cofactor is siroheme. [4Fe-4S] cluster is required as a cofactor.

The catalysed reaction is hydrogen sulfide + 3 NADP(+) + 3 H2O = sulfite + 3 NADPH + 4 H(+). The protein operates within sulfur metabolism; hydrogen sulfide biosynthesis; hydrogen sulfide from sulfite (NADPH route): step 1/1. Component of the sulfite reductase complex that catalyzes the 6-electron reduction of sulfite to sulfide. This is one of several activities required for the biosynthesis of L-cysteine from sulfate. The chain is Sulfite reductase [NADPH] hemoprotein beta-component from Staphylococcus epidermidis (strain ATCC 12228 / FDA PCI 1200).